Consider the following 95-residue polypeptide: Protein TusB (95 aa).

The protein belongs to the DsrH/TusB family. Heterohexamer, formed by a dimer of trimers. The hexameric TusBCD complex contains 2 copies each of TusB, TusC and TusD. The TusBCD complex interacts with TusE.

The protein resides in the cytoplasm. In terms of biological role, part of a sulfur-relay system required for 2-thiolation of 5-methylaminomethyl-2-thiouridine (mnm(5)s(2)U) at tRNA wobble positions. In Salmonella arizonae (strain ATCC BAA-731 / CDC346-86 / RSK2980), this protein is Protein TusB.